A 218-amino-acid chain; its full sequence is NAD(P)H-hydrate epimerase (218 aa).

The 207-residue stretch at 9–215 (MKKIDQYAID…DIGIPQKAIR (207 aa)) folds into the YjeF N-terminal domain. Residue 55–59 (NNGAD) participates in (6S)-NADPHX binding. 2 residues coordinate K(+): Asn-56 and Asp-127. Residues 131 to 137 (GTGLNRT) and Asp-160 each bind (6S)-NADPHX. Residue Ser-163 participates in K(+) binding.

This sequence belongs to the NnrE/AIBP family. Requires K(+) as cofactor.

It catalyses the reaction (6R)-NADHX = (6S)-NADHX. The catalysed reaction is (6R)-NADPHX = (6S)-NADPHX. In terms of biological role, catalyzes the epimerization of the S- and R-forms of NAD(P)HX, a damaged form of NAD(P)H that is a result of enzymatic or heat-dependent hydration. This is a prerequisite for the S-specific NAD(P)H-hydrate dehydratase to allow the repair of both epimers of NAD(P)HX. The polypeptide is NAD(P)H-hydrate epimerase (Anaerococcus prevotii (strain ATCC 9321 / DSM 20548 / JCM 6508 / NCTC 11806 / PC1) (Peptostreptococcus prevotii)).